We begin with the raw amino-acid sequence, 188 residues long: Peptidyl-tRNA hydrolase (188 aa).

Tyr-14 provides a ligand contact to tRNA. Residue His-19 is the Proton acceptor of the active site. 3 residues coordinate tRNA: Tyr-64, Asn-66, and Asn-112.

Belongs to the PTH family. Monomer.

The protein localises to the cytoplasm. The enzyme catalyses an N-acyl-L-alpha-aminoacyl-tRNA + H2O = an N-acyl-L-amino acid + a tRNA + H(+). Its function is as follows. Hydrolyzes ribosome-free peptidyl-tRNAs (with 1 or more amino acids incorporated), which drop off the ribosome during protein synthesis, or as a result of ribosome stalling. Functionally, catalyzes the release of premature peptidyl moieties from peptidyl-tRNA molecules trapped in stalled 50S ribosomal subunits, and thus maintains levels of free tRNAs and 50S ribosomes. The chain is Peptidyl-tRNA hydrolase from Leuconostoc mesenteroides subsp. mesenteroides (strain ATCC 8293 / DSM 20343 / BCRC 11652 / CCM 1803 / JCM 6124 / NCDO 523 / NBRC 100496 / NCIMB 8023 / NCTC 12954 / NRRL B-1118 / 37Y).